We begin with the raw amino-acid sequence, 419 residues long: MYKLIIHGGISLNGSVITAGSKNSSLPILFASILANGPITLTNTPHLSDVSTTLRLLMDMGAEFILESDNSLFINGSKLTNLVAQYNLVKTMRASILALGPMLAKYGKAKISLPGGCAIGPRPVNLHLEALENLGATIKVKNGYIYATAKELIGTKIHFKQISVTATENIIMAATLATGITTIYNAAQEPEIVDLVKCLIKMGAIISGAGTSIIIIQGVDELSGVTYSVCPDRIEAGTYLVATAITGGKITIKNVHYQSMHAILEKLLETGADIKTNKNSIILDMKGKRPRAVNIKTSTYPNFPTDMQAQFTALNAIADGYSTITETIFENRFMHIPELSRMGANLVLKGNTVVCKGVKYLTGMPLIATDLRASASLVLAGLVATGTTTIERVYHLDRGYETIEEKLKLLGAQIERVQD.

Position 22-23 (22-23) interacts with phosphoenolpyruvate; the sequence is KN. UDP-N-acetyl-alpha-D-glucosamine is bound at residue R93. Catalysis depends on C117, which acts as the Proton donor. Residue C117 is modified to 2-(S-cysteinyl)pyruvic acid O-phosphothioketal. Residues D306 and I328 each contribute to the UDP-N-acetyl-alpha-D-glucosamine site.

Belongs to the EPSP synthase family. MurA subfamily.

It is found in the cytoplasm. The catalysed reaction is phosphoenolpyruvate + UDP-N-acetyl-alpha-D-glucosamine = UDP-N-acetyl-3-O-(1-carboxyvinyl)-alpha-D-glucosamine + phosphate. It functions in the pathway cell wall biogenesis; peptidoglycan biosynthesis. Cell wall formation. Adds enolpyruvyl to UDP-N-acetylglucosamine. This chain is UDP-N-acetylglucosamine 1-carboxyvinyltransferase, found in Vesicomyosocius okutanii subsp. Calyptogena okutanii (strain HA).